A 423-amino-acid polypeptide reads, in one-letter code: Anthranilate 1,2-dioxygenase large subunit (423 aa).

In terms of domain architecture, Rieske spans 53 to 168 (WNFVALEAEI…VDSYRGLVFA (116 aa)). Cysteine 95, histidine 97, cysteine 115, and histidine 118 together coordinate [2Fe-2S] cluster. 3 residues coordinate Fe cation: histidine 223, histidine 228, and aspartate 370.

This sequence belongs to the bacterial ring-hydroxylating dioxygenase alpha subunit family. In terms of assembly, part of a multicomponent enzyme system composed of a reductase (AndAa), a ferredoxin (AndAb) and a two-subunit oxygenase component (AndAc and AndAd). Fe cation is required as a cofactor. [2Fe-2S] cluster serves as cofactor.

The catalysed reaction is anthranilate + NADH + O2 + 3 H(+) = catechol + NH4(+) + CO2 + NAD(+). It carries out the reaction anthranilate + NADPH + O2 + 3 H(+) = catechol + NH4(+) + CO2 + NADP(+). It participates in aromatic compound metabolism; anthranilate degradation via hydroxylation; catechol from anthranilate: step 1/1. In terms of biological role, oxygenase component of anthranilate dioxygenase multicomponent enzyme system which catalyzes the incorporation of both atoms of molecular oxygen into anthranilate to form catechol. Can also act on benzoate and salicylate but not on 2-chlorobenzoate or o-toluate. This Burkholderia cepacia (Pseudomonas cepacia) protein is Anthranilate 1,2-dioxygenase large subunit.